The sequence spans 335 residues: MSDMNAHISEWMKETEESPIVMSSRIRLARNLENHVHPLMFPSEQDGFRVINEVQDVLPDLDLMRLDTMDQQNKMKLVAKHLISPELIKQPASAVLLNKDESISIMINEEDHIRIQAMGTDLSLQDLYNIASEIDDTLDQSLDISYDEHLGYLTTCPTNIGTGMRASVMLHLPGLSIMKRMNRIAQTINRFGFTIRGIYGEGSQVYGHIYQISNQLTLGKTEDEIIDNLTEVVQQIINEEMQIRERLTQYNELETLDRIYRSLGILQNSRIISMEEASYRLSEVKLGIDLGYLTLSDFKFNELMVSIQSAFIYNDEDETISVNEKRANILREYTQ.

The region spanning 20–243 is the Phosphagen kinase C-terminal domain; it reads IVMSSRIRLA…QQIINEEMQI (224 aa). Residues 23–27, His81, Arg114, 165–169, and 196–201 contribute to the ATP site; these read SSRIR, RASVM, and RGIYGE.

It belongs to the ATP:guanido phosphotransferase family.

The catalysed reaction is L-arginyl-[protein] + ATP = N(omega)-phospho-L-arginyl-[protein] + ADP + H(+). Its function is as follows. Catalyzes the specific phosphorylation of arginine residues in proteins. The sequence is that of Protein-arginine kinase from Staphylococcus haemolyticus (strain JCSC1435).